The following is a 366-amino-acid chain: tRNA-specific 2-thiouridylase MnmA (366 aa).

ATP contacts are provided by residues 6–13 (AMSGGVDS) and L32. The Nucleophile role is filled by C101. C101 and C199 are oxidised to a cystine. ATP is bound at residue G125. The interval 149-151 (KDQ) is interaction with tRNA. Residue C199 is the Cysteine persulfide intermediate of the active site.

The protein belongs to the MnmA/TRMU family.

It is found in the cytoplasm. The enzyme catalyses S-sulfanyl-L-cysteinyl-[protein] + uridine(34) in tRNA + AH2 + ATP = 2-thiouridine(34) in tRNA + L-cysteinyl-[protein] + A + AMP + diphosphate + H(+). Catalyzes the 2-thiolation of uridine at the wobble position (U34) of tRNA, leading to the formation of s(2)U34. This is tRNA-specific 2-thiouridylase MnmA from Corynebacterium diphtheriae (strain ATCC 700971 / NCTC 13129 / Biotype gravis).